Consider the following 194-residue polypeptide: Transmembrane protein 212 (194 aa).

5 helical membrane passes run 11-31, 44-64, 76-96, 99-119, and 148-168; these read ILVT…FPVF, IACP…LLLA, ATFT…AIAL, ALLG…NYLG, and LQAL…TVFI.

The protein resides in the membrane. This chain is Transmembrane protein 212 (TMEM212), found in Homo sapiens (Human).